A 112-amino-acid polypeptide reads, in one-letter code: Osmotically-inducible putative lipoprotein OsmE (112 aa).

A signal peptide spans 1 to 20 (MNKNMAGILSAAAVLTMLAG). C21 is lipidated: N-palmitoyl cysteine. Residue C21 is the site of S-diacylglycerol cysteine attachment.

The protein localises to the cell inner membrane. The protein is Osmotically-inducible putative lipoprotein OsmE (osmE) of Escherichia coli O157:H7.